The chain runs to 86 residues: Cytochrome c oxidase subunit 12, mitochondrial (86 aa).

Residues 30 to 73 (TKHCFQSYIDYFRCIKAKGEDFVPCKQFWHAYQSLCPMEWVERW) enclose the CHCH domain. Residues 33 to 43 (CFQSYIDYFRC) carry the Cx9C motif motif. Intrachain disulfides connect Cys33–Cys65 and Cys43–Cys54. The Cx10C motif motif lies at 54–65 (CKQFWHAYQSLC).

Belongs to the cytochrome c oxidase subunit 6B family. Component of the cytochrome c oxidase (complex IV, CIV), a multisubunit enzyme composed of a catalytic core of 3 subunits and several supernumerary subunits. The complex exists as a monomer or a dimer and forms supercomplexes (SCs) in the inner mitochondrial membrane with ubiquinol-cytochrome c oxidoreductase (cytochrome b-c1 complex, complex III, CIII).

Its subcellular location is the mitochondrion inner membrane. Its pathway is energy metabolism; oxidative phosphorylation. Functionally, component of the cytochrome c oxidase, the last enzyme in the mitochondrial electron transport chain which drives oxidative phosphorylation. The respiratory chain contains 3 multisubunit complexes succinate dehydrogenase (complex II, CII), ubiquinol-cytochrome c oxidoreductase (cytochrome b-c1 complex, complex III, CIII) and cytochrome c oxidase (complex IV, CIV), that cooperate to transfer electrons derived from NADH and succinate to molecular oxygen, creating an electrochemical gradient over the inner membrane that drives transmembrane transport and the ATP synthase. Cytochrome c oxidase is the component of the respiratory chain that catalyzes the reduction of oxygen to water. Electrons originating from reduced cytochrome c in the intermembrane space (IMS) are transferred via the dinuclear copper A center (CU(A)) of subunit 2 and heme A of subunit 1 to the active site in subunit 1, a binuclear center (BNC) formed by heme A3 and copper B (CU(B)). The BNC reduces molecular oxygen to 2 water molecules using 4 electrons from cytochrome c in the IMS and 4 protons from the mitochondrial matrix. The polypeptide is Cytochrome c oxidase subunit 12, mitochondrial (cox12) (Schizosaccharomyces pombe (strain 972 / ATCC 24843) (Fission yeast)).